We begin with the raw amino-acid sequence, 120 residues long: NAD(P)H-quinone oxidoreductase subunit 3, chloroplastic (120 aa).

3 helical membrane passes run 9 to 29, 64 to 84, and 88 to 108; these read IFWVFLIISSVIPILAFLISG, MFALVFVVFDVETVFLYPWAM, and VLGVSVFIEALIFVLILIVGL.

It belongs to the complex I subunit 3 family. NDH is composed of at least 16 different subunits, 5 of which are encoded in the nucleus.

The protein localises to the plastid. It is found in the chloroplast thylakoid membrane. It carries out the reaction a plastoquinone + NADH + (n+1) H(+)(in) = a plastoquinol + NAD(+) + n H(+)(out). It catalyses the reaction a plastoquinone + NADPH + (n+1) H(+)(in) = a plastoquinol + NADP(+) + n H(+)(out). NDH shuttles electrons from NAD(P)H:plastoquinone, via FMN and iron-sulfur (Fe-S) centers, to quinones in the photosynthetic chain and possibly in a chloroplast respiratory chain. The immediate electron acceptor for the enzyme in this species is believed to be plastoquinone. Couples the redox reaction to proton translocation, and thus conserves the redox energy in a proton gradient. The polypeptide is NAD(P)H-quinone oxidoreductase subunit 3, chloroplastic (Cucumis sativus (Cucumber)).